Consider the following 569-residue polypeptide: Pyrophosphate--fructose 6-phosphate 1-phosphotransferase subunit beta 2 (569 aa).

Position 107 (Gly107) interacts with diphosphate. Asp201 contacts Mg(2+). Substrate-binding positions include 229–231 (TID), 268–269 (KY), 276–278 (MGR), Glu337, and 442–445 (YEGR). Asp231 (proton acceptor) is an active-site residue.

Belongs to the phosphofructokinase type A (PFKA) family. PPi-dependent PFK group II subfamily. Clade 'Long' sub-subfamily. Tetramer of two alpha (regulatory) and two beta (catalytic) chains. It depends on Mg(2+) as a cofactor.

It is found in the cytoplasm. The enzyme catalyses beta-D-fructose 6-phosphate + diphosphate = beta-D-fructose 1,6-bisphosphate + phosphate + H(+). It participates in carbohydrate degradation; glycolysis; D-glyceraldehyde 3-phosphate and glycerone phosphate from D-glucose: step 3/4. With respect to regulation, allosterically activated by fructose 2,6-bisphosphate. Its function is as follows. Catalytic subunit of pyrophosphate--fructose 6-phosphate 1-phosphotransferase. Catalyzes the phosphorylation of D-fructose 6-phosphate, the first committing step of glycolysis. Uses inorganic phosphate (PPi) as phosphoryl donor instead of ATP like common ATP-dependent phosphofructokinases (ATP-PFKs), which renders the reaction reversible, and can thus function both in glycolysis and gluconeogenesis. In Arabidopsis thaliana (Mouse-ear cress), this protein is Pyrophosphate--fructose 6-phosphate 1-phosphotransferase subunit beta 2.